The following is a 299-amino-acid chain: MDATFPPQRNITARPAPDRIRREQCKLAKRLRRQVGQAIADFGMIEANDKIMVCLSGGKDSYTLLDMLLQLRAKAPVPFELTAVNLDQKQPGFPKHVLPEYLSSIGMPHHIIEQDTYSVVTRVVPEGKTLCALCSRMRRGALYAYAETQGFTKIALGHHRDDMVATFFMNLFHHAKLSGMPPKLRSDNGKHVVIRPLAYVSETDIIAYADAREFPIIPCNLCGSQENLQRKQVGVILKAWEKEYPGRIEQIARALGNIRPSQLADQSLFDFQALGRHSNTPLPNAHAWLAGDLANDTAP.

The PP-loop motif signature appears at 56 to 61; sequence SGGKDS. Residues Cys-131, Cys-134, and Cys-222 each contribute to the [4Fe-4S] cluster site.

This sequence belongs to the TtcA family. In terms of assembly, homodimer. Requires Mg(2+) as cofactor. [4Fe-4S] cluster is required as a cofactor.

The protein resides in the cytoplasm. The enzyme catalyses cytidine(32) in tRNA + S-sulfanyl-L-cysteinyl-[cysteine desulfurase] + AH2 + ATP = 2-thiocytidine(32) in tRNA + L-cysteinyl-[cysteine desulfurase] + A + AMP + diphosphate + H(+). The protein operates within tRNA modification. Its function is as follows. Catalyzes the ATP-dependent 2-thiolation of cytidine in position 32 of tRNA, to form 2-thiocytidine (s(2)C32). The sulfur atoms are provided by the cysteine/cysteine desulfurase (IscS) system. In Xylella fastidiosa (strain 9a5c), this protein is tRNA-cytidine(32) 2-sulfurtransferase.